The following is a 506-amino-acid chain: ATP synthase subunit alpha (506 aa).

Residue 170–177 participates in ATP binding; sequence GDRQTGKT.

This sequence belongs to the ATPase alpha/beta chains family. In terms of assembly, F-type ATPases have 2 components, CF(1) - the catalytic core - and CF(0) - the membrane proton channel. CF(1) has five subunits: alpha(3), beta(3), gamma(1), delta(1), epsilon(1). CF(0) has four main subunits: a(1), b(1), b'(1) and c(9-12).

The protein localises to the cellular thylakoid membrane. It carries out the reaction ATP + H2O + 4 H(+)(in) = ADP + phosphate + 5 H(+)(out). Functionally, produces ATP from ADP in the presence of a proton gradient across the membrane. The alpha chain is a regulatory subunit. This chain is ATP synthase subunit alpha, found in Synechococcus sp. (strain CC9311).